Consider the following 66-residue polypeptide: Phylloseptin-S4 (66 aa).

A signal peptide spans Met1–Cys22. Residues Glu23 to Arg46 constitute a propeptide that is removed on maturation. A disordered region spans residues Glu25–Glu44. The span at Glu30–Lys41 shows a compositional bias: acidic residues. Leucine amide is present on Leu65.

In terms of tissue distribution, expressed by the skin glands.

Its subcellular location is the secreted. It localises to the target cell membrane. In terms of biological role, antimicrobial peptide with high activity against Gram-positive bacteria, moderate activity against Gram-negative bacteria, and moderate activity against fungi. Acts by causing bacterial membrane disruption inducing leakage of the intracellular content followed by cell death. It adopts an alpha-helical amphipathic structure in membrane environments. Also shows highly potent antiparasitic activity against Leishmania species. Shows moderate hemolytic activity on human erythrocytes (LC(50)=33 uM). Is also active on human monocytes (IC(50)=23 uM). This is Phylloseptin-S4 from Phyllomedusa sauvagei (Sauvage's leaf frog).